The following is a 233-amino-acid chain: Uracil-DNA glycosylase (233 aa).

The active-site Proton acceptor is Asp-70.

This sequence belongs to the uracil-DNA glycosylase (UDG) superfamily. UNG family.

The protein localises to the cytoplasm. It catalyses the reaction Hydrolyzes single-stranded DNA or mismatched double-stranded DNA and polynucleotides, releasing free uracil.. Functionally, excises uracil residues from the DNA which can arise as a result of misincorporation of dUMP residues by DNA polymerase or due to deamination of cytosine. This Helicobacter pylori (strain G27) protein is Uracil-DNA glycosylase.